The sequence spans 383 residues: Glutaminyl-peptide cyclotransferase-like protein (383 aa).

Residues 1 to 25 (MPSGGRGRPRLQVGERSLLERPSPP) form a disordered region. Residues 35 to 57 (LLPQLLLALTVASVFYTIWRIWH) form a helical membrane-spanning segment. Residues Cys-168 and Cys-192 are joined by a disulfide bond. Position 187 (Asp-187) interacts with Zn(2+). Glu-226 serves as the catalytic Proton acceptor. Glu-227 lines the Zn(2+) pocket. Asp-270 (proton acceptor) is an active-site residue. Position 352 (His-352) interacts with Zn(2+).

It belongs to the glutaminyl-peptide cyclotransferase family.

Its subcellular location is the golgi apparatus membrane. It carries out the reaction N-terminal L-glutaminyl-[peptide] = N-terminal 5-oxo-L-prolyl-[peptide] + NH4(+). Responsible for the biosynthesis of pyroglutamyl peptides. In Bos taurus (Bovine), this protein is Glutaminyl-peptide cyclotransferase-like protein (QPCTL).